The following is a 520-amino-acid chain: Sodium-dependent dicarboxylate transporter SdcS (520 aa).

14 helical membrane-spanning segments follow: residues 30-50 (AGQL…LLFF), 55-75 (LPWE…WWIT), 77-97 (AIPI…GHIL), 104-124 (SEYG…AIAM), 160-180 (SMFV…LAII), 207-227 (IGYA…PLII), 242-262 (FAKW…ITWL), 298-318 (KVVQ…EFLL), 323-343 (VTSS…LFVI), 362-382 (ELPW…KGIS), 399-419 (GVSP…LTEV), 428-448 (MILP…LLLM), 452-472 (AMAA…AIIF), and 491-511 (LISA…VLGI).

This sequence belongs to the SLC13A/DASS transporter (TC 2.A.47) family. NADC subfamily.

It localises to the cell membrane. In terms of biological role, mediates the transport of the dicarboxylates fumarate, malate, and succinate across the cytoplasmic membrane via a Na(+)-electrochemical gradient. The protein is Sodium-dependent dicarboxylate transporter SdcS (sdcS) of Staphylococcus aureus (strain bovine RF122 / ET3-1).